Reading from the N-terminus, the 545-residue chain is MAKRIIYNENARRALEKGMDILAESVAVTLGPKGRNVVLEKKFGAPQIVNDGVTIAKEIELEDHIENTGVALIRQAASKTNDAAGDGTTTATVLAHAMVKEGLRNVAAGANPIALKRGIDKATQFLVEKIAEHARPVEDSKAIAQVAAISAGNDEEVGRMIADAMDKVGKEGVISLEEAKSMTTELEVTEGMRFDKGYISPYFATDTERMEAVLDEPFVLVTDKKITLVQDLVPILEQVARAGKPLVIIAEDIEKEALATLVVNRLRGVLNVAAVKAPGFGDRSKAMLEDIAVLTAGQVIAEDAGLKLENAKLDMLGKARRITITKDHTTIVAEGNEKAVKARCEQIRRQIEETDSSYDKEKLQERLAKLAGGVAVIKVGAATETEMKDRKLRLEDAINATKAAVEEGIVPGGGTTLVHLAPELSNWAAEHLTGEELIGANIVERALSAPLRRIAENAGQNGAIIVERVKEKPFDVGYDAAKDEYVNMFDAGIVDPAKVTRSALQNAASIAGMVLTTECIIVDKPEPKENNPAGSGAGMGGDFDY.

Residues 29-32, 86-90, G413, 479-481, and D495 contribute to the ATP site; these read TLGP, DGTTT, and DAA. The segment at 525–545 is disordered; the sequence is PEPKENNPAGSGAGMGGDFDY. Over residues 535 to 545 the composition is skewed to gly residues; the sequence is SGAGMGGDFDY.

It belongs to the chaperonin (HSP60) family. Forms a cylinder of 14 subunits composed of two heptameric rings stacked back-to-back. Interacts with the co-chaperonin GroES.

Its subcellular location is the cytoplasm. The enzyme catalyses ATP + H2O + a folded polypeptide = ADP + phosphate + an unfolded polypeptide.. Its function is as follows. Together with its co-chaperonin GroES, plays an essential role in assisting protein folding. The GroEL-GroES system forms a nano-cage that allows encapsulation of the non-native substrate proteins and provides a physical environment optimized to promote and accelerate protein folding. This is Chaperonin GroEL 1 from Thermostichus vulcanus (Synechococcus vulcanus).